Reading from the N-terminus, the 372-residue chain is N-methyl-L-tryptophan oxidase (372 aa).

4 to 34 is a binding site for FAD; the sequence is DLIIIGSGSVGAAAGYYATRAGLNVLMTDAH. Residue Cys308 is modified to S-8alpha-FAD cysteine.

This sequence belongs to the MSOX/MTOX family. MTOX subfamily. In terms of assembly, monomer. The cofactor is FAD.

The enzyme catalyses N(alpha)-methyl-L-tryptophan + O2 + H2O = L-tryptophan + formaldehyde + H2O2. Its function is as follows. Catalyzes the oxidative demethylation of N-methyl-L-tryptophan. The sequence is that of N-methyl-L-tryptophan oxidase from Shigella boydii serotype 18 (strain CDC 3083-94 / BS512).